The following is a 96-amino-acid chain: Aspartyl/glutamyl-tRNA(Asn/Gln) amidotransferase subunit C (96 aa).

This sequence belongs to the GatC family. Heterotrimer of A, B and C subunits.

The enzyme catalyses L-glutamyl-tRNA(Gln) + L-glutamine + ATP + H2O = L-glutaminyl-tRNA(Gln) + L-glutamate + ADP + phosphate + H(+). It catalyses the reaction L-aspartyl-tRNA(Asn) + L-glutamine + ATP + H2O = L-asparaginyl-tRNA(Asn) + L-glutamate + ADP + phosphate + 2 H(+). In terms of biological role, allows the formation of correctly charged Asn-tRNA(Asn) or Gln-tRNA(Gln) through the transamidation of misacylated Asp-tRNA(Asn) or Glu-tRNA(Gln) in organisms which lack either or both of asparaginyl-tRNA or glutaminyl-tRNA synthetases. The reaction takes place in the presence of glutamine and ATP through an activated phospho-Asp-tRNA(Asn) or phospho-Glu-tRNA(Gln). The chain is Aspartyl/glutamyl-tRNA(Asn/Gln) amidotransferase subunit C from Trichormus variabilis (strain ATCC 29413 / PCC 7937) (Anabaena variabilis).